The sequence spans 623 residues: tRNA uridine 5-carboxymethylaminomethyl modification enzyme MnmG (623 aa).

Residues glycine 11–glycine 16, valine 123, and serine 178 contribute to the FAD site. Glycine 270–phenylalanine 284 lines the NAD(+) pocket. Glutamine 367 is an FAD binding site.

The protein belongs to the MnmG family. In terms of assembly, homodimer. Heterotetramer of two MnmE and two MnmG subunits. Requires FAD as cofactor.

It localises to the cytoplasm. Functionally, NAD-binding protein involved in the addition of a carboxymethylaminomethyl (cmnm) group at the wobble position (U34) of certain tRNAs, forming tRNA-cmnm(5)s(2)U34. This is tRNA uridine 5-carboxymethylaminomethyl modification enzyme MnmG from Phocaeicola vulgatus (strain ATCC 8482 / DSM 1447 / JCM 5826 / CCUG 4940 / NBRC 14291 / NCTC 11154) (Bacteroides vulgatus).